Here is a 989-residue protein sequence, read N- to C-terminus: Phosphoenolpyruvate carboxylase (989 aa).

Residues His175 and Lys630 contribute to the active site.

It belongs to the PEPCase type 1 family. Mg(2+) serves as cofactor.

The catalysed reaction is oxaloacetate + phosphate = phosphoenolpyruvate + hydrogencarbonate. Its function is as follows. Forms oxaloacetate, a four-carbon dicarboxylic acid source for the tricarboxylic acid cycle. The sequence is that of Phosphoenolpyruvate carboxylase from Prochlorococcus marinus (strain AS9601).